A 201-amino-acid polypeptide reads, in one-letter code: MRLIAENLGGERGGEAVFSGVGFALDQGQALVVTGPNGSGKSTLLRIIAGLLPKAEGRLLLENGGDDFPSIASACHYLGHQNAMKTALSVVENLRFWRDFNGRGDSGVEEALDTVGLGGVGHLPFGYLSTGQRRRAAIAKLLVSHRPLWLLDEPTAGLDKASEARFAGLMAGHCAGGGMIVAATHLPLGIEGAELRMGVAG.

The ABC transporter domain occupies 3–200; it reads LIAENLGGER…EGAELRMGVA (198 aa). An ATP-binding site is contributed by 35-42; the sequence is GPNGSGKS.

The protein belongs to the ABC transporter superfamily. CcmA exporter (TC 3.A.1.107) family. In terms of assembly, the complex is composed of two ATP-binding proteins (CcmA) and two transmembrane proteins (CcmB).

Its subcellular location is the cell inner membrane. It carries out the reaction heme b(in) + ATP + H2O = heme b(out) + ADP + phosphate + H(+). Its function is as follows. Part of the ABC transporter complex CcmAB involved in the biogenesis of c-type cytochromes; once thought to export heme, this seems not to be the case, but its exact role is uncertain. Responsible for energy coupling to the transport system. In Mesorhizobium japonicum (strain LMG 29417 / CECT 9101 / MAFF 303099) (Mesorhizobium loti (strain MAFF 303099)), this protein is Cytochrome c biogenesis ATP-binding export protein CcmA.